Reading from the N-terminus, the 377-residue chain is Geranylgeranyl transferase type-1 subunit beta (377 aa).

4 PFTB repeats span residues 144-186 (KEAC…YMLN), 193-234 (MKKA…CLMG), 245-284 (LNRIKRWCIMRQQNGYHGRPNKPVDTCYSFWVGATLKLLK), and 291-333 (FEKN…SLME). Geranylgeranyl diphosphate-binding positions include 219–221 (HGG) and 263–266 (RPNK). Positions 269 and 271 each coordinate Zn(2+). 272–275 (YSFW) contributes to the geranylgeranyl diphosphate binding site. Residue His321 coordinates Zn(2+).

The protein belongs to the protein prenyltransferase subunit beta family. As to quaternary structure, heterodimer of FNTA and PGGT1B. PGGT1B mediates interaction with substrate peptides. Requires Zn(2+) as cofactor. The cofactor is Mg(2+).

It carries out the reaction geranylgeranyl diphosphate + L-cysteinyl-[protein] = S-geranylgeranyl-L-cysteinyl-[protein] + diphosphate. Its function is as follows. Catalyzes the transfer of a geranylgeranyl moiety from geranylgeranyl diphosphate to a cysteine at the fourth position from the C-terminus of proteins with the C-terminal sequence Cys-aliphatic-aliphatic-X. Known substrates include RAC1, RAC2, RAP1A and RAP1B. The chain is Geranylgeranyl transferase type-1 subunit beta (Pggt1b) from Rattus norvegicus (Rat).